We begin with the raw amino-acid sequence, 270 residues long: tRNA pseudouridine synthase A (270 aa).

D52 (nucleophile) is an active-site residue. Y110 lines the substrate pocket.

The protein belongs to the tRNA pseudouridine synthase TruA family. Homodimer.

The enzyme catalyses uridine(38/39/40) in tRNA = pseudouridine(38/39/40) in tRNA. Formation of pseudouridine at positions 38, 39 and 40 in the anticodon stem and loop of transfer RNAs. This chain is tRNA pseudouridine synthase A, found in Roseiflexus castenholzii (strain DSM 13941 / HLO8).